The following is a 92-amino-acid chain: Small ribosomal subunit protein uS19c (92 aa).

This sequence belongs to the universal ribosomal protein uS19 family.

The protein resides in the plastid. Its subcellular location is the chloroplast. Its function is as follows. Protein S19 forms a complex with S13 that binds strongly to the 16S ribosomal RNA. This chain is Small ribosomal subunit protein uS19c, found in Angiopteris evecta (Mule's foot fern).